The sequence spans 869 residues: Mismatch repair endonuclease PMS2 (869 aa).

Residues N44, D69, E108, A109, and L110 each contribute to the ATP site. A Nuclear localization signal motif is present at residues 585–588 (RRFK).

It belongs to the DNA mismatch repair MutL/HexB family.

It is found in the nucleus. It catalyses the reaction ATP + H2O = ADP + phosphate + H(+). In terms of biological role, component of the post-replicative DNA mismatch repair system (MMR). Involved in B cell growth by positively regulating B cell proliferation and controlling replication efficiency. Controls cell cycle to prevent re-replication and defects in DNA damage-induced G2 checkpoint. Doesn't seem to counteract or control the immunoglobulin gene conversion (Ig GC) and to contribute to guanine/uracil mismatch repair. Possesses an ATPase activity, but in the absence of gross structural changes, ATP hydrolysis may not be necessary for proficient mismatch repair. The protein is Mismatch repair endonuclease PMS2 of Gallus gallus (Chicken).